The chain runs to 286 residues: Polyamine aminopropyltransferase (286 aa).

The PABS domain maps to 5–238 (TMWHETLHDQ…GIMTFAWATD (234 aa)). An S-methyl-5'-thioadenosine-binding site is contributed by Q33. Residues H64 and D88 each contribute to the spermidine site. S-methyl-5'-thioadenosine contacts are provided by residues E108 and 140-141 (DG). The Proton acceptor role is filled by D158. Position 158–161 (158–161 (DCTD)) interacts with spermidine. P165 contacts S-methyl-5'-thioadenosine.

It belongs to the spermidine/spermine synthase family. As to quaternary structure, homodimer or homotetramer.

Its subcellular location is the cytoplasm. It catalyses the reaction S-adenosyl 3-(methylsulfanyl)propylamine + putrescine = S-methyl-5'-thioadenosine + spermidine + H(+). The protein operates within amine and polyamine biosynthesis; spermidine biosynthesis; spermidine from putrescine: step 1/1. Functionally, catalyzes the irreversible transfer of a propylamine group from the amino donor S-adenosylmethioninamine (decarboxy-AdoMet) to putrescine (1,4-diaminobutane) to yield spermidine. The chain is Polyamine aminopropyltransferase from Salmonella schwarzengrund (strain CVM19633).